The sequence spans 515 residues: Protein FAM98A (515 aa).

Disordered regions lie at residues 297 to 411 (VLMG…YHGG) and 432 to 515 (SGYQ…HYTS). A compositionally biased stretch (basic and acidic residues) spans 302–311 (VPDRGGRPNE). Positions 382–395 (WTDGGSASGGGYQD) are enriched in gly residues. Basic and acidic residues predominate over residues 444-456 (RYQDGGHHGERGS). Over residues 457-481 (GRGGRGGRGGRGGRGSQGGGWGGRG) the composition is skewed to gly residues. Residues 485–501 (YHQGGQFEQHFQHGGYQ) show a composition bias toward low complexity. Polar residues predominate over residues 502 to 515 (YSHSGFGQGRHYTS).

This sequence belongs to the FAM98 family. As to quaternary structure, interacts (via N- and C-terminus) with DDX1. Interacts (via N- and C-terminus) with C14orf166. Interacts with FAM98B. Interacts with PLEKHM1 (via N- and C-terminus).

Positively stimulates PRMT1-induced protein arginine methylation. Involved in skeletal homeostasis. Positively regulates lysosome peripheral distribution and ruffled border formation in osteoclasts. The polypeptide is Protein FAM98A (Rattus norvegicus (Rat)).